The following is a 269-amino-acid chain: 4-hydroxy-tetrahydrodipicolinate reductase (269 aa).

NAD(+) is bound by residues 10-15 (GANGRM), glutamate 36, 99-101 (GTT), and 123-126 (AANF). Histidine 156 (proton donor/acceptor) is an active-site residue. A (S)-2,3,4,5-tetrahydrodipicolinate-binding site is contributed by histidine 157. The active-site Proton donor is lysine 160. 166–167 (GT) contacts (S)-2,3,4,5-tetrahydrodipicolinate.

This sequence belongs to the DapB family.

Its subcellular location is the cytoplasm. The catalysed reaction is (S)-2,3,4,5-tetrahydrodipicolinate + NAD(+) + H2O = (2S,4S)-4-hydroxy-2,3,4,5-tetrahydrodipicolinate + NADH + H(+). It catalyses the reaction (S)-2,3,4,5-tetrahydrodipicolinate + NADP(+) + H2O = (2S,4S)-4-hydroxy-2,3,4,5-tetrahydrodipicolinate + NADPH + H(+). The protein operates within amino-acid biosynthesis; L-lysine biosynthesis via DAP pathway; (S)-tetrahydrodipicolinate from L-aspartate: step 4/4. Its function is as follows. Catalyzes the conversion of 4-hydroxy-tetrahydrodipicolinate (HTPA) to tetrahydrodipicolinate. This Neisseria meningitidis serogroup C (strain 053442) protein is 4-hydroxy-tetrahydrodipicolinate reductase.